A 69-amino-acid chain; its full sequence is Small, acid-soluble spore protein C4 (69 aa).

It belongs to the alpha/beta-type SASP family.

Functionally, SASP are bound to spore DNA. They are double-stranded DNA-binding proteins that cause DNA to change to an a-like conformation. They protect the DNA backbone from chemical and enzymatic cleavage and are thus involved in dormant spore's high resistance to UV light. The sequence is that of Small, acid-soluble spore protein C4 (SASP-C4) from Priestia megaterium (Bacillus megaterium).